A 431-amino-acid chain; its full sequence is UDP-N-acetylglucosamine 1-carboxyvinyltransferase (431 aa).

Position 22–23 (22–23 (KN)) interacts with phosphoenolpyruvate. Arg92 contributes to the UDP-N-acetyl-alpha-D-glucosamine binding site. Asp116 (proton donor) is an active-site residue. UDP-N-acetyl-alpha-D-glucosamine is bound by residues 121 to 125 (RPIDQ), Asp307, and Ile330.

Belongs to the EPSP synthase family. MurA subfamily.

It localises to the cytoplasm. The catalysed reaction is phosphoenolpyruvate + UDP-N-acetyl-alpha-D-glucosamine = UDP-N-acetyl-3-O-(1-carboxyvinyl)-alpha-D-glucosamine + phosphate. It functions in the pathway cell wall biogenesis; peptidoglycan biosynthesis. Its function is as follows. Cell wall formation. Adds enolpyruvyl to UDP-N-acetylglucosamine. The protein is UDP-N-acetylglucosamine 1-carboxyvinyltransferase of Lactobacillus acidophilus (strain ATCC 700396 / NCK56 / N2 / NCFM).